Consider the following 2327-residue polypeptide: Pre-mRNA-processing-splicing factor 8 homolog (2327 aa).

Positions 1–14 (MDDTNSNINQSNES) are enriched in polar residues. Residues 1 to 20 (MDDTNSNINQSNESQHLEEK) are disordered. The tract at residues 801 to 1292 (TTVHWLEKRR…KIQTRVKIGL (492 aa)) is reverse transcriptase homology domain. The linker stretch occupies residues 1293–1566 (NSKMPNRFPP…TLKISLIQIF (274 aa)). The segment at 1502 to 1515 (MKYKKLTHAQRSGL) is important for branch point selection. The tract at residues 1570–1740 (LWQKIHESLV…LRERIRKGLQ (171 aa)) is restriction endonuclease homology domain. The involved in interaction with pre-mRNA 5' splice site stretch occupies residues 1657-2023 (GDFDSHDIER…QIAEIEKQKT (367 aa)). The RNase H homology domain stretch occupies residues 1755–2008 (NFGELFSNKI…ILGMEISAPS (254 aa)). The MPN domain maps to 2093-2223 (TYVFPKNILK…LTAYHLTPSG (131 aa)).

In terms of assembly, part of the U5 snRNP complex and of the U4/U6-U5 tri-snRNP complex.

It is found in the nucleus speckle. In terms of biological role, functions as a scaffold that mediates the ordered assembly of spliceosomal proteins and snRNAs. Required for the assembly of the U4/U6-U5 tri-snRNP complex. Functions as a scaffold that positions spliceosomal U2, U5 and U6 snRNAs at splice sites on pre-mRNA substrates, so that splicing can occur. Interacts with both the 5' and the 3' splice site. The protein is Pre-mRNA-processing-splicing factor 8 homolog (prpf8) of Dictyostelium discoideum (Social amoeba).